We begin with the raw amino-acid sequence, 311 residues long: Cytochrome f (311 aa).

Residues 1–27 form the signal peptide; the sequence is MKHFFKSLTLAIALAASVLFWSPQAQA. Tyr-28, Cys-48, Cys-51, and His-52 together coordinate heme. The helical transmembrane segment at 279–296 threads the bilayer; the sequence is WLLVFFAAITLSQILLVL.

It belongs to the cytochrome f family. In terms of assembly, the 4 large subunits of the cytochrome b6-f complex are cytochrome b6, subunit IV (17 kDa polypeptide, PetD), cytochrome f and the Rieske protein, while the 4 small subunits are PetG, PetL, PetM and PetN. The complex functions as a dimer. Heme is required as a cofactor.

The protein localises to the cellular thylakoid membrane. In terms of biological role, component of the cytochrome b6-f complex, which mediates electron transfer between photosystem II (PSII) and photosystem I (PSI), cyclic electron flow around PSI, and state transitions. This Synechococcus elongatus protein is Cytochrome f.